Here is a 253-residue protein sequence, read N- to C-terminus: tRNA uridine(34) hydroxylase (253 aa).

Positions 127 to 221 (HGRPLVLLDT…YFEDVGGEGY (95 aa)) constitute a Rhodanese domain. Cys-181 serves as the catalytic Cysteine persulfide intermediate.

The protein belongs to the TrhO family.

It catalyses the reaction uridine(34) in tRNA + AH2 + O2 = 5-hydroxyuridine(34) in tRNA + A + H2O. Functionally, catalyzes oxygen-dependent 5-hydroxyuridine (ho5U) modification at position 34 in tRNAs. The chain is tRNA uridine(34) hydroxylase from Xanthomonas campestris pv. campestris (strain 8004).